The sequence spans 190 residues: Frizzled-6 (190 aa).

Positions 1–20 constitute an FZ domain; sequence FGFAWPEELECSRLVNCDET. Topologically, residues 1–89 are extracellular; the sequence is FGFAWPEELE…NYELDVAKSF (89 aa). Residues 90–110 traverse the membrane as a helical segment; that stretch reads IGIVSIFCLCATLFTFLTFLI. At 111-121 the chain is on the cytoplasmic side; the sequence is DVKRFRYPERP. Residues 122–142 form a helical membrane-spanning segment; the sequence is IIYYSVCYSIVSLMYFIGFLL. At 143-169 the chain is on the extracellular side; that stretch reads GNRTACNKADDKLEIGETVVLGSQNKA. Asn-144 is a glycosylation site (N-linked (GlcNAc...) asparagine). A helical membrane pass occupies residues 170-190; the sequence is CTVLFMVLYFFTMAGTIWWVI.

Belongs to the G-protein coupled receptor Fz/Smo family.

The protein resides in the membrane. It localises to the cell membrane. It is found in the cell surface. The protein localises to the apical cell membrane. Its subcellular location is the cytoplasmic vesicle membrane. Receptor for Wnt proteins. Most of frizzled receptors are coupled to the beta-catenin canonical signaling pathway, which leads to the activation of disheveled proteins, inhibition of GSK-3 kinase, nuclear accumulation of beta-catenin and activation of Wnt target genes. A second signaling pathway involving PKC and calcium fluxes has been seen for some family members, but it is not yet clear if it represents a distinct pathway or if it can be integrated in the canonical pathway, as PKC seems to be required for Wnt-mediated inactivation of GSK-3 kinase. Both pathways seem to involve interactions with G-proteins. Activation by Wnt5A stimulates PKC activity via a G-protein-dependent mechanism. Involved in transduction and intercellular transmission of polarity information during tissue morphogenesis and/or in differentiated tissues. Together with FZD3, may be involved in the neural tube closure and plays a role in the regulation of the establishment of planar cell polarity (PCP), particularly in the orientation of asymmetric bundles of stereocilia on the apical faces of a subset of auditory and vestibular sensory cells located in the inner ear. The chain is Frizzled-6 (FZD6) from Gallus gallus (Chicken).